The primary structure comprises 362 residues: Alpha-2-HS-glycoprotein (362 aa).

Positions 1-15 are cleaved as a signal peptide; that stretch reads LILFFCLAQLWGCRA. The Cystatin fetuin-A-type 1 domain maps to 24–130; sequence YREPACDDVE…QFSVLFAKCD (107 aa). Cystine bridges form between cysteine 29–cysteine 353, cysteine 86–cysteine 97, cysteine 111–cysteine 129, cysteine 143–cysteine 146, cysteine 205–cysteine 216, and cysteine 227–cysteine 244. N-linked (GlcNAc...) asparagine glycosylation is present at asparagine 96. Phosphoserine occurs at positions 131, 132, and 135. The Cystatin fetuin-A-type 2 domain maps to 141-252; sequence KVCPNCPLLA…TCTVFQTQPV (112 aa). Asparagine 153 and asparagine 173 each carry an N-linked (GlcNAc...) asparagine glycan. A phosphoserine mark is found at serine 314, serine 318, serine 321, and serine 323. A glycan (O-linked (GalNAc...) threonine) is linked at threonine 332.

It belongs to the fetuin family. Phosphorylated by FAM20C in the extracellular medium. In terms of tissue distribution, expressed by the liver and secreted in plasma.

It is found in the secreted. The chain is Alpha-2-HS-glycoprotein (AHSG) from Sus scrofa (Pig).